A 324-amino-acid chain; its full sequence is tRNA-cytidine(32) 2-sulfurtransferase (324 aa).

Residues 1–26 (MQDLIDSPTAARTPAEEKIRHEGNKL) form a disordered region. The span at 14 to 26 (PAEEKIRHEGNKL) shows a compositional bias: basic and acidic residues. The short motif at 55–60 (SGGKDS) is the PP-loop motif element. [4Fe-4S] cluster contacts are provided by C130, C133, and C221. A disordered region spans residues 278-310 (RPDANGDTAFDPIDPEDPREDAGDACASSPADG).

The protein belongs to the TtcA family. Homodimer. Mg(2+) is required as a cofactor. It depends on [4Fe-4S] cluster as a cofactor.

Its subcellular location is the cytoplasm. The catalysed reaction is cytidine(32) in tRNA + S-sulfanyl-L-cysteinyl-[cysteine desulfurase] + AH2 + ATP = 2-thiocytidine(32) in tRNA + L-cysteinyl-[cysteine desulfurase] + A + AMP + diphosphate + H(+). The protein operates within tRNA modification. Functionally, catalyzes the ATP-dependent 2-thiolation of cytidine in position 32 of tRNA, to form 2-thiocytidine (s(2)C32). The sulfur atoms are provided by the cysteine/cysteine desulfurase (IscS) system. This chain is tRNA-cytidine(32) 2-sulfurtransferase, found in Bordetella petrii (strain ATCC BAA-461 / DSM 12804 / CCUG 43448).